We begin with the raw amino-acid sequence, 325 residues long: Ferrochelatase (325 aa).

Residues H172 and E267 each contribute to the Fe cation site.

Belongs to the ferrochelatase family.

The protein localises to the cytoplasm. The enzyme catalyses heme b + 2 H(+) = protoporphyrin IX + Fe(2+). The protein operates within porphyrin-containing compound metabolism; protoheme biosynthesis; protoheme from protoporphyrin-IX: step 1/1. Its function is as follows. Catalyzes the ferrous insertion into protoporphyrin IX. The sequence is that of Ferrochelatase from Acidobacterium capsulatum (strain ATCC 51196 / DSM 11244 / BCRC 80197 / JCM 7670 / NBRC 15755 / NCIMB 13165 / 161).